A 666-amino-acid chain; its full sequence is Long chain acyl-CoA synthetase 4 (666 aa).

228–239 lines the ATP pocket; sequence IMYTSGTTGDPK. The segment at 495 to 519 is fatty acid-binding; sequence DGWLHTGDVGEWQPDGSMKIIDRKK.

The protein belongs to the ATP-dependent AMP-binding enzyme family. Mg(2+) is required as a cofactor.

It catalyses the reaction a long-chain fatty acid + ATP + CoA = a long-chain fatty acyl-CoA + AMP + diphosphate. It functions in the pathway lipid metabolism; fatty acid metabolism. In terms of biological role, activation of long-chain fatty acids for both synthesis of cellular lipids, and degradation via beta-oxidation. Preferentially uses palmitate, palmitoleate, oleate and linoleate. The sequence is that of Long chain acyl-CoA synthetase 4 (LACS4) from Arabidopsis thaliana (Mouse-ear cress).